Here is a 223-residue protein sequence, read N- to C-terminus: Endonuclease V (223 aa).

Mg(2+)-binding residues include Asp-35 and Asp-103.

It belongs to the endonuclease V family. Requires Mg(2+) as cofactor.

The protein resides in the cytoplasm. The enzyme catalyses Endonucleolytic cleavage at apurinic or apyrimidinic sites to products with a 5'-phosphate.. In terms of biological role, DNA repair enzyme involved in the repair of deaminated bases. Selectively cleaves double-stranded DNA at the second phosphodiester bond 3' to a deoxyinosine leaving behind the intact lesion on the nicked DNA. The protein is Endonuclease V of Salmonella schwarzengrund (strain CVM19633).